The following is a 339-amino-acid chain: DNA-directed RNA polymerase subunit alpha (339 aa).

Positions 1 to 235 are alpha N-terminal domain (alpha-NTD); sequence MVIQRNWQSL…DQLQLFINFE (235 aa). Residues 251–339 form an alpha C-terminal domain (alpha-CTD) region; that stretch reads FNRNLLRKVD…DLAKRLEEPF (89 aa).

The protein belongs to the RNA polymerase alpha chain family. As to quaternary structure, homodimer. The RNAP catalytic core consists of 2 alpha, 1 beta, 1 beta' and 1 omega subunit. When a sigma factor is associated with the core the holoenzyme is formed, which can initiate transcription.

It carries out the reaction RNA(n) + a ribonucleoside 5'-triphosphate = RNA(n+1) + diphosphate. Functionally, DNA-dependent RNA polymerase catalyzes the transcription of DNA into RNA using the four ribonucleoside triphosphates as substrates. This chain is DNA-directed RNA polymerase subunit alpha, found in Granulibacter bethesdensis (strain ATCC BAA-1260 / CGDNIH1).